Here is a 206-residue protein sequence, read N- to C-terminus: NADH-quinone oxidoreductase subunit C (206 aa).

It belongs to the complex I 30 kDa subunit family. As to quaternary structure, NDH-1 is composed of 14 different subunits. Subunits NuoB, C, D, E, F, and G constitute the peripheral sector of the complex.

The protein resides in the cell inner membrane. The catalysed reaction is a quinone + NADH + 5 H(+)(in) = a quinol + NAD(+) + 4 H(+)(out). In terms of biological role, NDH-1 shuttles electrons from NADH, via FMN and iron-sulfur (Fe-S) centers, to quinones in the respiratory chain. The immediate electron acceptor for the enzyme in this species is believed to be ubiquinone. Couples the redox reaction to proton translocation (for every two electrons transferred, four hydrogen ions are translocated across the cytoplasmic membrane), and thus conserves the redox energy in a proton gradient. The chain is NADH-quinone oxidoreductase subunit C from Nitrosomonas europaea (strain ATCC 19718 / CIP 103999 / KCTC 2705 / NBRC 14298).